Consider the following 198-residue polypeptide: Transcription factor FapR (198 aa).

The region spanning Thr-102–Ser-167 is the MaoC-like domain.

This sequence belongs to the FapR family.

In terms of biological role, transcriptional factor involved in regulation of membrane lipid biosynthesis by repressing genes involved in fatty acid and phospholipid metabolism. In Geobacillus kaustophilus (strain HTA426), this protein is Transcription factor FapR.